Reading from the N-terminus, the 360-residue chain is DNA polymerase IV (360 aa).

A UmuC domain is found at 9 to 191; it reads IMHLDIDAFY…LNINKIPYIG (183 aa). Mg(2+) contacts are provided by D13 and D108. The active site involves E109.

The protein belongs to the DNA polymerase type-Y family. As to quaternary structure, monomer. Mg(2+) is required as a cofactor.

Its subcellular location is the cytoplasm. It carries out the reaction DNA(n) + a 2'-deoxyribonucleoside 5'-triphosphate = DNA(n+1) + diphosphate. In terms of biological role, poorly processive, error-prone DNA polymerase involved in untargeted mutagenesis. Copies undamaged DNA at stalled replication forks, which arise in vivo from mismatched or misaligned primer ends. These misaligned primers can be extended by PolIV. Exhibits no 3'-5' exonuclease (proofreading) activity. May be involved in translesional synthesis, in conjunction with the beta clamp from PolIII. This Ureaplasma parvum serovar 3 (strain ATCC 27815 / 27 / NCTC 11736) protein is DNA polymerase IV.